The chain runs to 317 residues: MDSQPQSKKAARGADKTARNPIPIIPAPTERLPKPQWLRVRSPLSPEVDQLKKILRDAALHTVCEEASCPNLGECFGGGTATFMILGDICTRRCPFCDVAHGRPEAPDPLESVHLARTVASMKLRFVVITSVDRDDLRDGGARHFAEVISALREHCPELHVEILVPDFRGRVANALAAFRETPPDVFNHNLETVPRLYLQARPGADYHHSLQLLAAFKAQHPQIPTKSGLMLGLGEEIDEIRGVMRDLRQAGCELLTIGQYLAPSRHHLPVARFVPPEEFQQLQRDGMAMGFRHVASGPLVRSSYHAERSFHEIGGD.

The interval 1–28 is disordered; sequence MDSQPQSKKAARGADKTARNPIPIIPAP. Residues cysteine 64, cysteine 69, cysteine 75, cysteine 90, cysteine 94, cysteine 97, and serine 304 each coordinate [4Fe-4S] cluster. The Radical SAM core domain occupies 76-293; that stretch reads FGGGTATFMI…QRDGMAMGFR (218 aa).

Belongs to the radical SAM superfamily. Lipoyl synthase family. [4Fe-4S] cluster is required as a cofactor.

Its subcellular location is the cytoplasm. It carries out the reaction [[Fe-S] cluster scaffold protein carrying a second [4Fe-4S](2+) cluster] + N(6)-octanoyl-L-lysyl-[protein] + 2 oxidized [2Fe-2S]-[ferredoxin] + 2 S-adenosyl-L-methionine + 4 H(+) = [[Fe-S] cluster scaffold protein] + N(6)-[(R)-dihydrolipoyl]-L-lysyl-[protein] + 4 Fe(3+) + 2 hydrogen sulfide + 2 5'-deoxyadenosine + 2 L-methionine + 2 reduced [2Fe-2S]-[ferredoxin]. It participates in protein modification; protein lipoylation via endogenous pathway; protein N(6)-(lipoyl)lysine from octanoyl-[acyl-carrier-protein]: step 2/2. In terms of biological role, catalyzes the radical-mediated insertion of two sulfur atoms into the C-6 and C-8 positions of the octanoyl moiety bound to the lipoyl domains of lipoate-dependent enzymes, thereby converting the octanoylated domains into lipoylated derivatives. This Acidithiobacillus ferrooxidans (strain ATCC 23270 / DSM 14882 / CIP 104768 / NCIMB 8455) (Ferrobacillus ferrooxidans (strain ATCC 23270)) protein is Lipoyl synthase.